The chain runs to 257 residues: 5-keto-4-deoxy-D-glucarate aldolase (257 aa).

The Proton acceptor role is filled by histidine 51. Residue glutamine 152 participates in substrate binding. Glutamate 154 contributes to the Mg(2+) binding site. Substrate contacts are provided by serine 179 and aspartate 180. Aspartate 180 serves as a coordination point for Mg(2+).

This sequence belongs to the HpcH/HpaI aldolase family. KDGluc aldolase subfamily. Homohexamer; trimer of dimers. The cofactor is Mg(2+).

It catalyses the reaction 5-dehydro-4-deoxy-D-glucarate = 2-hydroxy-3-oxopropanoate + pyruvate. It carries out the reaction 2-dehydro-3-deoxy-D-glucarate = 2-hydroxy-3-oxopropanoate + pyruvate. Its pathway is carbohydrate acid metabolism; galactarate degradation; D-glycerate from galactarate: step 2/3. Functionally, catalyzes the reversible retro-aldol cleavage of both 5-keto-4-deoxy-D-glucarate and 2-keto-3-deoxy-D-glucarate to pyruvate and tartronic semialdehyde. This is 5-keto-4-deoxy-D-glucarate aldolase from Citrobacter koseri (strain ATCC BAA-895 / CDC 4225-83 / SGSC4696).